We begin with the raw amino-acid sequence, 100 residues long: Urease subunit gamma (100 aa).

This sequence belongs to the urease gamma subunit family. Heterotrimer of UreA (gamma), UreB (beta) and UreC (alpha) subunits. Three heterotrimers associate to form the active enzyme.

Its subcellular location is the cytoplasm. The catalysed reaction is urea + 2 H2O + H(+) = hydrogencarbonate + 2 NH4(+). Its pathway is nitrogen metabolism; urea degradation; CO(2) and NH(3) from urea (urease route): step 1/1. This is Urease subunit gamma from Chelativorans sp. (strain BNC1).